A 103-amino-acid chain; its full sequence is Alkanal monooxygenase alpha chain (103 aa).

In terms of assembly, heterodimer of an alpha and a beta chain.

It carries out the reaction a long-chain fatty aldehyde + FMNH2 + O2 = a long-chain fatty acid + hnu + FMN + H2O + 2 H(+). Light-emitting reaction in luminous bacteria. The sequence is that of Alkanal monooxygenase alpha chain (luxA) from Vibrio cholerae.